The primary structure comprises 412 residues: Probable tRNA pseudouridine synthase D (412 aa).

The Nucleophile role is filled by Asp-97. Residues 167–370 (ALPNYYGYQR…YGSYRRARLQ (204 aa)) enclose the TRUD domain.

It belongs to the pseudouridine synthase TruD family.

The enzyme catalyses uridine(13) in tRNA = pseudouridine(13) in tRNA. Its function is as follows. Could be responsible for synthesis of pseudouridine from uracil-13 in transfer RNAs. In Pyrobaculum neutrophilum (strain DSM 2338 / JCM 9278 / NBRC 100436 / V24Sta) (Thermoproteus neutrophilus), this protein is Probable tRNA pseudouridine synthase D.